Consider the following 100-residue polypeptide: Guanine nucleotide-binding protein subunit gamma 2 (100 aa).

An N-acetylmethionine modification is found at M1. Positions 19-55 (TRGKHRIQAELKRLEQEARFLEEELEQLEKMDNASAS) form a coiled coil. One can recognise a G protein gamma domain in the interval 21 to 100 (GKHRIQAELK…EAKRCGCSIL (80 aa)). A regulates lipidation and cell membrane subcellular localization region spans residues 90 to 96 (KEAKRCG). C95 carries S-palmitoyl cysteine lipidation. Residue C97 is modified to Cysteine methyl ester. Residue C97 is the site of S-farnesyl cysteine attachment. The propeptide at 98–100 (SIL) is removed in mature form.

As to quaternary structure, g proteins are composed of 3 units, alpha, beta and gamma. GPG1 interacts with the beta subunit GB1. The dimer GB1-GG2 interacts with NDL1, NDL2 and NDL3. Binds to NUDT7. In terms of tissue distribution, mostly expressed in roots (excluded from the stele), seedlings (especially at the hypocotyl/root junction), floral stems, floral buds, flowers and siliques, and, to a lower extent, in leaves (restricted to guard cells). Also present in hydathods.

It is found in the cell membrane. Guanine nucleotide-binding proteins (G proteins) are involved as a modulator or transducer in various transmembrane signaling systems. The beta and gamma chains are required for the GTPase activity, for replacement of GDP by GTP, and for G protein-effector interaction. Involved in the abscisic acid (ABA) and ethylene signaling pathways. Regulates basipetal transport of auxin (IAA) in roots and hypocotyls, and thus modulates root architecture (e.g. lateral root formation). The heterotrimeric G-protein controls defense responses to necrotrophic and vascular fungi probably by modulating cell wall-related genes expression; involved in resistance to Plectosphaerella cucumerina. The protein is Guanine nucleotide-binding protein subunit gamma 2 (GG2) of Arabidopsis thaliana (Mouse-ear cress).